A 622-amino-acid chain; its full sequence is MVVPGNSPGIPRDHAIDISDRAMDLEAEPDHSSDLKEVQKLHELVKRLEIQNQQLKIKRNPQSSNIQNISGIDNQLSALNCSGVMNSINIQPEKGDLQKMPNLQSQLEQISSEKENIPALGMDAQMQYEKVCSDSKPGSKVEINCDQDDCCFYSVDGSGRSDLEEAISKMSELNSSGENILDETALDEVDVLELGSCSEDEEDCWLYVSPRKVENAEQKLDSPLKWCRQVLDHHSPETEAACRSLIGKLDQASRWKSLYCSPLASPSAYNTNAECSYGSNTLNSPGCLKSTNKALLTCGSSGYLSFHSALSSQSSVDSELSTSDDSISMGYKLQDLTDVQVMARLQEESLRQDYASSSASVSRRSSSASLHSLRRGTFSDQEFDTYSLEDEDDCDCSLSFRSSHRYSPSPLSSPRCQSPSAAESRATTSRIRPPRRSIQNHVQERMKYANCEDELRHSMPNLAKTSLRSLEAVRSSRSLESDLQGPSSRLTRMQQPSTSTPPSKVRYGASNQPALTVRQPGKPGVSTSSLMTSRQPVKSSGYNNSSGLRKIQSSPGLNPSGSGAVSRTGNASSSIKHSTVKSQASMGSTVPKSKMIQPSRRSLSSAKMNSTLDDDSWKDGCY.

Positions Asp-34–Asn-60 form a coiled coil. Disordered stretches follow at residues His-404–His-441 and Val-473–Tyr-622. A compositionally biased stretch (low complexity) spans Arg-405–Arg-415. 4 stretches are compositionally biased toward polar residues: residues Cys-416–Arg-430, Gln-484–Pro-502, Val-525–Pro-591, and Ser-599–Thr-611.

It belongs to the SLAIN motif-containing family.

In Xenopus tropicalis (Western clawed frog), this protein is SLAIN motif-containing protein-like.